Reading from the N-terminus, the 2727-residue chain is E3 ubiquitin-protein ligase Ufd4 (2727 aa).

2 disordered regions span residues 247–271 and 365–389; these read THSS…TNSD and RGSN…TDRT. Positions 365–374 are enriched in polar residues; the sequence is RGSNNPNQGQ. ANK repeat units follow at residues 422–451, 453–482, and 486–518; these read VGQT…DVNK, QRSS…YPDL, and DGKT…WMSP. Residues 682–702 form a disordered region; it reads AQRSSTSVVVAPRPTSDDPME. The MIB/HERC2 domain maps to 1322-1392; that stretch reads QIRAQLKHMT…KYDLKLADCE (71 aa). 2 stretches are compositionally biased toward polar residues: residues 1401-1430 and 1437-1448; these read QSMG…STPS and KNQNPEGASNQT. 6 disordered regions span residues 1401–1448, 1483–1512, 1570–1592, 1845–1871, 1905–1930, and 2092–2115; these read QSMG…SNQT, NTSS…GPSP, ESVT…REND, YPSL…QQSA, ALLG…DEYE, and STCL…ASTL. The segment covering 1575 to 1592 has biased composition (low complexity); it reads SQSSSHPDVQSSSPREND. Residues 1909 to 1930 show a composition bias toward acidic residues; sequence DLDDEDDMDEDNDEEENEDEYE. Over residues 2104–2115 the composition is skewed to polar residues; that stretch reads PDVSSKSGASTL. One can recognise an HECT domain in the interval 2289–2727; the sequence is RKSVLEVEFL…ATKEKGFHLN (439 aa). The active-site Glycyl thioester intermediate is C2696.

It belongs to the UPL family. K-HECT subfamily.

It carries out the reaction S-ubiquitinyl-[E2 ubiquitin-conjugating enzyme]-L-cysteine + [acceptor protein]-L-lysine = [E2 ubiquitin-conjugating enzyme]-L-cysteine + N(6)-ubiquitinyl-[acceptor protein]-L-lysine.. It participates in protein modification; protein ubiquitination. In terms of biological role, E3 ubiquitin-protein ligase which accepts ubiquitin from an E2 ubiquitin-conjugating enzyme in the form of a thioester and then directly transfers the ubiquitin to targeted substrates. Involved in the negative regulation of the Ras/MAPK signaling pathway in the wing by acting with the E2 enzyme Unc6 and the putative E3 ligases poe and Kcmf1 to mediate the ubiquitination and proteasomal degradation of rl/MAPK. The chain is E3 ubiquitin-protein ligase Ufd4 from Drosophila melanogaster (Fruit fly).